A 932-amino-acid polypeptide reads, in one-letter code: Protocadherin gamma-A9 (932 aa).

Residues 1–28 form the signal peptide; it reads MAAPTKCQLRGRLVLLCSLLGMLWEARA. 6 consecutive Cadherin domains span residues 29 to 133, 134 to 242, 243 to 347, 348 to 452, 453 to 562, and 570 to 683; these read SQIR…APKF, QAES…APVF, AQRI…RPEV, TITS…PPAF, SQAS…APEI, and DGST…IPAD. Residues 29 to 692 lie on the Extracellular side of the membrane; that stretch reads SQIRYSVPEE…DLEASDLTLY (664 aa). 2 N-linked (GlcNAc...) asparagine glycosylation sites follow: Asn47 and Asn127. Asn389, Asn419, and Asn545 each carry an N-linked (GlcNAc...) asparagine glycan. The helical transmembrane segment at 693–713 threads the bilayer; that stretch reads LVVAVAVVSCVFLTFVITLLA. Topologically, residues 714–932 are cytoplasmic; it reads LRLRHWHSSH…KKKSGKKEKK (219 aa). Disordered regions lie at residues 803–841 and 902–932; these read DTPL…WPNN and ATLT…KEKK. Positions 816-841 are enriched in polar residues; it reads WRFSQAQRPGTSGSQNGDDTGTWPNN. The span at 922–932 shows a compositional bias: basic residues; the sequence is NKKKSGKKEKK.

The protein resides in the cell membrane. Its function is as follows. Potential calcium-dependent cell-adhesion protein. May be involved in the establishment and maintenance of specific neuronal connections in the brain. The protein is Protocadherin gamma-A9 (PCDHGA9) of Homo sapiens (Human).